Consider the following 484-residue polypeptide: Ribosomal RNA small subunit methyltransferase F (484 aa).

S-adenosyl-L-methionine contacts are provided by residues 119–125, glutamate 143, aspartate 170, and aspartate 188; that span reads ASAPGSK. Cysteine 241 acts as the Nucleophile in catalysis.

This sequence belongs to the class I-like SAM-binding methyltransferase superfamily. RsmB/NOP family.

The protein resides in the cytoplasm. It carries out the reaction cytidine(1407) in 16S rRNA + S-adenosyl-L-methionine = 5-methylcytidine(1407) in 16S rRNA + S-adenosyl-L-homocysteine + H(+). Functionally, specifically methylates the cytosine at position 1407 (m5C1407) of 16S rRNA. The sequence is that of Ribosomal RNA small subunit methyltransferase F from Shewanella frigidimarina (strain NCIMB 400).